The sequence spans 457 residues: Forkhead box protein N3 (457 aa).

The tract at residues 1-24 is disordered; it reads MGPVMPASKKAESSGISVSSGLSQ. The segment covering 13–23 has biased composition (low complexity); sequence SSGISVSSGLS. Serine 83, serine 85, and serine 97 each carry phosphoserine. A disordered region spans residues 86-109; it reads PVQDLDDDTPPSPAHSDMPYDARQ. A DNA-binding region (fork-head) is located at residues 114–210; it reads KPPYSFSCLI…QALKKTPYHP (97 aa). The segment at 285–422 is disordered; the sequence is RTESEPPCGS…PESDDEEMKE (138 aa). 2 stretches are compositionally biased toward low complexity: residues 308–331 and 342–353; these read SSAK…SSSS and GSQEGSEGSFQS. Residues 354 to 376 are compositionally biased toward basic and acidic residues; sequence HESHSEPEEEDRKPSPKEGKDAL. Residues 384 to 396 are compositionally biased toward basic residues; that stretch reads QHKKRQHFAKARK. Phosphoserine is present on serine 415.

As to quaternary structure, interacts through its C-terminus with the C-terminus of SNW1/SKIP.

It is found in the nucleus. In terms of biological role, acts as a transcriptional repressor. May be involved in DNA damage-inducible cell cycle arrests (checkpoints). The sequence is that of Forkhead box protein N3 (Foxn3) from Mus musculus (Mouse).